Reading from the N-terminus, the 32-residue chain is Photosystem II reaction center protein T (32 aa).

A helical transmembrane segment spans residues 3–23 (ALVYTFLLIGTLMVIFFAVFF).

It belongs to the PsbT family. PSII is composed of 1 copy each of membrane proteins PsbA, PsbB, PsbC, PsbD, PsbE, PsbF, PsbH, PsbI, PsbJ, PsbK, PsbL, PsbM, PsbT, PsbX, PsbY, PsbZ, Psb30/Ycf12, at least 3 peripheral proteins of the oxygen-evolving complex and a large number of cofactors. It forms dimeric complexes.

It is found in the plastid. It localises to the chloroplast thylakoid membrane. Found at the monomer-monomer interface of the photosystem II (PS II) dimer, plays a role in assembly and dimerization of PSII. PSII is a light-driven water plastoquinone oxidoreductase, using light energy to abstract electrons from H(2)O, generating a proton gradient subsequently used for ATP formation. In Trieres chinensis (Marine centric diatom), this protein is Photosystem II reaction center protein T.